Consider the following 615-residue polypeptide: Protein DlpA (615 aa).

It belongs to the isocitrate and isopropylmalate dehydrogenases family. This sequence to M.jannaschii MJ0644 in the C-terminal section.

The polypeptide is Protein DlpA (dlpA) (Legionella pneumophila subsp. pneumophila (strain Philadelphia 1 / ATCC 33152 / DSM 7513)).